A 141-amino-acid polypeptide reads, in one-letter code: Guanyl-specific ribonuclease Sa3 (141 aa).

A signal peptide (or 43) is located at residues 1-36; the sequence is MRIPPRLVALAGAAAVAATLIAGPVAAAAPASHAVA. A disulfide bridge links cysteine 52 with cysteine 141. The active-site Proton acceptor is glutamate 99. Histidine 130 (proton donor) is an active-site residue.

This sequence belongs to the ribonuclease N1/T1 family.

It is found in the secreted. The enzyme catalyses [RNA] containing guanosine + H2O = an [RNA fragment]-3'-guanosine-3'-phosphate + a 5'-hydroxy-ribonucleotide-3'-[RNA fragment].. The chain is Guanyl-specific ribonuclease Sa3 (rnaSA3) from Kitasatospora aureofaciens (Streptomyces aureofaciens).